The primary structure comprises 92 residues: Small ribosomal subunit protein uS19 (92 aa).

The protein belongs to the universal ribosomal protein uS19 family.

Protein S19 forms a complex with S13 that binds strongly to the 16S ribosomal RNA. This Hyphomonas neptunium (strain ATCC 15444) protein is Small ribosomal subunit protein uS19.